A 160-amino-acid polypeptide reads, in one-letter code: H/ACA ribonucleoprotein complex subunit 2-like protein (160 aa).

This sequence belongs to the eukaryotic ribosomal protein eL8 family. In terms of assembly, component of the small nucleolar ribonucleoprotein particle containing H/ACA-type snoRNAs (H/ACA snoRNPs).

It is found in the nucleus. Its subcellular location is the nucleolus. In terms of biological role, required for ribosome biogenesis. Part of a complex which catalyzes pseudouridylation of rRNA. This involves the isomerization of uridine such that the ribose is subsequently attached to C5, instead of the normal N1. Pseudouridine ('psi') residues may serve to stabilize the conformation of rRNAs. This is H/ACA ribonucleoprotein complex subunit 2-like protein (NHP2) from Drosophila yakuba (Fruit fly).